A 1123-amino-acid chain; its full sequence is Telomerase reverse transcriptase (1123 aa).

Disordered regions lie at residues 191–242 (ENKR…KTTK) and 410–439 (GTTS…PKCP). Polar residues predominate over residues 201–210 (QPPTKRQWLS). The Reverse transcriptase domain maps to 596–929 (LVDDAEAESS…PFVRWTGLLI (334 aa)). Mg(2+) is bound by residues aspartate 691, aspartate 860, and aspartate 861.

It belongs to the reverse transcriptase family. Telomerase subfamily. Component of the telomerase ribonucleoprotein complex. Interacts with POT1A.

It localises to the nucleus. The protein localises to the chromosome. The protein resides in the telomere. The enzyme catalyses DNA(n) + a 2'-deoxyribonucleoside 5'-triphosphate = DNA(n+1) + diphosphate. Telomerase is a ribonucleoprotein enzyme essential for the replication of chromosome termini in most eukaryotes. It elongates telomeres. It is a reverse transcriptase that adds simple sequence repeats to chromosome ends by copying a template sequence within the RNA component of the enzyme. Required to prevent genome instability induced by breakage-fusion-bridge (BFB) cycles. Can extend completely non-telomeric sequences using RNA template in vitro. This Arabidopsis thaliana (Mouse-ear cress) protein is Telomerase reverse transcriptase (TERT).